Consider the following 380-residue polypeptide: Cytochrome b (380 aa).

4 helical membrane-spanning segments follow: residues 33 to 53 (FGSL…FLAM), 77 to 98 (WMIR…FLHI), 113 to 133 (WNIG…GYVL), and 178 to 198 (FFTL…LHLL). Positions 83 and 97 each coordinate heme b. Heme b contacts are provided by histidine 182 and histidine 196. Histidine 201 provides a ligand contact to a ubiquinone. A run of 4 helical transmembrane segments spans residues 226 to 246 (IKDI…TLLS), 288 to 308 (LGGV…PALH), 320 to 340 (LSQF…WIGG), and 347 to 367 (FITI…LLMP).

It belongs to the cytochrome b family. The cytochrome bc1 complex contains 11 subunits: 3 respiratory subunits (MT-CYB, CYC1 and UQCRFS1), 2 core proteins (UQCRC1 and UQCRC2) and 6 low-molecular weight proteins (UQCRH/QCR6, UQCRB/QCR7, UQCRQ/QCR8, UQCR10/QCR9, UQCR11/QCR10 and a cleavage product of UQCRFS1). This cytochrome bc1 complex then forms a dimer. Heme b serves as cofactor.

It is found in the mitochondrion inner membrane. Its function is as follows. Component of the ubiquinol-cytochrome c reductase complex (complex III or cytochrome b-c1 complex) that is part of the mitochondrial respiratory chain. The b-c1 complex mediates electron transfer from ubiquinol to cytochrome c. Contributes to the generation of a proton gradient across the mitochondrial membrane that is then used for ATP synthesis. In Pongo pygmaeus (Bornean orangutan), this protein is Cytochrome b (MT-CYB).